Consider the following 62-residue polypeptide: uncharacterized protein (62 aa).

The disordered stretch occupies residues 38 to 62; sequence VKSESDTADSKRSAEAKADEAPAKM.

This is an uncharacterized protein from Schizosaccharomyces pombe (strain 972 / ATCC 24843) (Fission yeast).